The primary structure comprises 151 residues: UPF0756 membrane protein Lreu_0946 (151 aa).

The next 4 membrane-spanning stretches (helical) occupy residues 4-24 (WLFL…SLII), 52-72 (WGVT…QIGF), 77-97 (AAFK…VAIL), and 115-135 (LVLG…GPVI).

It belongs to the UPF0756 family.

The protein resides in the cell membrane. This Limosilactobacillus reuteri (strain DSM 20016) (Lactobacillus reuteri) protein is UPF0756 membrane protein Lreu_0946.